Reading from the N-terminus, the 296-residue chain is Claudin-23 (296 aa).

Topologically, residues 1 to 2 are cytoplasmic; it reads MR. A helical transmembrane segment spans residues 3-23; sequence TPVVMTLGMVLTPCGLLLNLV. Over 24 to 81 the chain is Extracellular; that stretch reads STLAPGWRLVKGFLDQPVDVVLYQGLWDICREQSSRERECGQPDEWNYFQTQPVQVAR. Residues 82 to 102 form a helical membrane-spanning segment; the sequence is GLMITSLATTALGLLLASLGV. The Cytoplasmic portion of the chain corresponds to 103 to 111; the sequence is RCWQDEPHY. Residues 112 to 132 form a helical membrane-spanning segment; sequence GLAGLSGVVFFVAGLFSLIPV. Over 133-160 the chain is Extracellular; the sequence is SWYNHFLSDPDVLAAPSSPVTVQVSYSL. Residues 161–181 traverse the membrane as a helical segment; sequence VLGYLGSCLLLLGGFSLALSF. The Cytoplasmic segment spans residues 182 to 296; the sequence is APWCEERCRR…QNSLPCDSDL (115 aa). Residues 224-296 are disordered; that stretch reads YSDGQHRPPP…QNSLPCDSDL (73 aa). Low complexity predominate over residues 273–284; the sequence is TSQGGSSSRSTR. Positions 285 to 296 are enriched in polar residues; it reads PCQNSLPCDSDL.

Belongs to the claudin family.

It is found in the cell junction. The protein resides in the tight junction. The protein localises to the cell membrane. Plays a major role in tight junction-specific obliteration of the intercellular space, through calcium-independent cell-adhesion activity. The chain is Claudin-23 (Cldn23) from Mus musculus (Mouse).